The primary structure comprises 237 residues: LexA repressor (237 aa).

Residues F26–T46 constitute a DNA-binding region (H-T-H motif). Catalysis depends on for autocatalytic cleavage activity residues S158 and K196.

It belongs to the peptidase S24 family. As to quaternary structure, homodimer.

The catalysed reaction is Hydrolysis of Ala-|-Gly bond in repressor LexA.. Functionally, represses a number of genes involved in the response to DNA damage (SOS response), including recA and lexA. In the presence of single-stranded DNA, RecA interacts with LexA causing an autocatalytic cleavage which disrupts the DNA-binding part of LexA, leading to derepression of the SOS regulon and eventually DNA repair. In Rhodospirillum centenum (strain ATCC 51521 / SW), this protein is LexA repressor.